The chain runs to 701 residues: Dynein axonemal intermediate chain 1 (701 aa).

2 disordered regions span residues 1 to 45 and 119 to 165; these read MPSK…VRPP and EMVA…DIPA. Residues Ser-124 and Ser-127 each carry the phosphoserine modification. Over residues 136–155 the composition is skewed to acidic residues; the sequence is ENLEEEEEPKEGEGEAEAEA. WD repeat units lie at residues 382–422, 431–474, 539–579, 581–621, and 629–668; these read SSES…SQPC, KHTD…LVHI, AHNM…PMFI, DLNS…YEAI, and KKKNKITHVQFNPIHPIIIVGDDRGHIICLKLSPNLRKMP.

The protein belongs to the dynein intermediate chain family. As to quaternary structure, consists of at least two heavy chains and a number of intermediate and light chains. Interacts with BICD2. Interacts with CFAP45 and CFAP52. Interacts with CFAP53.

Its subcellular location is the cytoplasm. The protein resides in the cytoskeleton. It is found in the cilium axoneme. Part of the dynein complex of respiratory cilia. The sequence is that of Dynein axonemal intermediate chain 1 (Dnai1) from Mus musculus (Mouse).